An 814-amino-acid chain; its full sequence is Dimethyl sulfoxide reductase DmsA (814 aa).

The segment at residues 1–45 (MKTKIPDAVLAAEVSRRGLVKTTAIGGLAMASSALTLPFSRIAHA) is a signal peptide (tat-type signal). One can recognise a 4Fe-4S Mo/W bis-MGD-type domain in the interval 56-118 (EKVIWSACTV…SMRRRVYNPD (63 aa)). Positions 63, 67, 71, and 104 each coordinate [4Fe-4S] cluster. Residues 172 to 176 (LGGTM), S205, 244 to 245 (ET), 270 to 271 (ID), 291 to 293 (GTD), 386 to 387 (WG), R390, N488, 512 to 513 (ID), H701, 707 to 709 (HST), N788, and 804 to 805 (SH) contribute to the Mo-bis(molybdopterin guanine dinucleotide) site.

The protein belongs to the prokaryotic molybdopterin-containing oxidoreductase family. As to quaternary structure, heterotrimeric enzyme composed of a catalytic heterodimer (DmsAB) and a membrane anchor protein (DmsC). Requires [4Fe-4S] cluster as cofactor. The cofactor is Mo-bis(molybdopterin guanine dinucleotide). Exported by the Tat system. The position of the signal peptide cleavage has been experimentally proven. Can also be exported by the Sec system.

Its subcellular location is the cell membrane. The enzyme catalyses dimethyl sulfide + a menaquinone + H2O = dimethyl sulfoxide + a menaquinol. With respect to regulation, inhibited by dithionite, sodium hydrogensulfite and tungstate. Functionally, catalyzes the reduction of dimethyl sulfoxide (DMSO) to dimethyl sulfide (DMS). DMSO reductase serves as the terminal reductase under anaerobic conditions, with DMSO being the terminal electron acceptor. Terminal reductase during anaerobic growth on various sulfoxides and N-oxide compounds. Allows E.coli to grow anaerobically on DMSO as respiratory oxidant. The protein is Dimethyl sulfoxide reductase DmsA (dmsA) of Escherichia coli (strain K12).